We begin with the raw amino-acid sequence, 245 residues long: OCIA domain-containing protein 1 (245 aa).

One can recognise an OCIA domain in the interval 1–112 (MNGRADFREP…KKLENSPLGE (112 aa)). 4 positions are modified to phosphoserine: S108, S116, S123, and S191. Disordered regions lie at residues 111 to 141 (GEAL…VSGQ) and 169 to 245 (NESA…TWDE). Composition is skewed to basic and acidic residues over residues 190 to 210 (ESPK…RESY) and 224 to 238 (PMHE…KVNK).

Belongs to the OCIAD1 family. In terms of assembly, interacts with OCIAD2. Interacts with STAT3. Isoform 1 is highly expressed in many tissues, including testis, brain, placenta, ovary, prostate and mammary gland. Isoform 2 expression is restricted to the central nervous system including brain, cerebellum and spinal cord.

The protein localises to the endosome. Maintains stem cell potency. Increases STAT3 phosphorylation and controls ERK phosphorylation. May act as a scaffold, increasing STAT3 recruitment onto endosomes. Involved in integrin-mediated cancer cell adhesion and colony formation in ovarian cancer. This is OCIA domain-containing protein 1 from Homo sapiens (Human).